Reading from the N-terminus, the 273-residue chain is MAIVKCKPTSAGRRHVVKVVNAELHKGKPYAPLLDTKSKTGGRNNLGRITTRHIGGGHKQHYRLIDFKRNKFDIPAVVERLEYDPNRSANIALVLYKDGERRYILAPKGLSVGDMIQAGASAPIKVGNALPMRNIPVGTTVHNVELKPGKGGQIARSAGAYVQIIAREGNYVTLRLRSGEMRKVLAECIATIGEVGNSEHMLRVLGKAGANRWRGIRPTVRGTAMNPVDHPHGGGEGRNFGKHPVTPWGVQTKGKKTRHNKRTDKYIVRRRGK.

The disordered stretch occupies residues Arg221 to Arg262. Residues Lys253–Arg262 show a composition bias toward basic residues.

Belongs to the universal ribosomal protein uL2 family. In terms of assembly, part of the 50S ribosomal subunit. Forms a bridge to the 30S subunit in the 70S ribosome.

Functionally, one of the primary rRNA binding proteins. Required for association of the 30S and 50S subunits to form the 70S ribosome, for tRNA binding and peptide bond formation. It has been suggested to have peptidyltransferase activity; this is somewhat controversial. Makes several contacts with the 16S rRNA in the 70S ribosome. In Haemophilus ducreyi (strain 35000HP / ATCC 700724), this protein is Large ribosomal subunit protein uL2.